The primary structure comprises 237 residues: Ribonuclease PH (237 aa).

Phosphate-binding positions include Arg86 and 124 to 126 (GTR).

This sequence belongs to the RNase PH family. As to quaternary structure, homohexameric ring arranged as a trimer of dimers.

It carries out the reaction tRNA(n+1) + phosphate = tRNA(n) + a ribonucleoside 5'-diphosphate. Functionally, phosphorolytic 3'-5' exoribonuclease that plays an important role in tRNA 3'-end maturation. Removes nucleotide residues following the 3'-CCA terminus of tRNAs; can also add nucleotides to the ends of RNA molecules by using nucleoside diphosphates as substrates, but this may not be physiologically important. Probably plays a role in initiation of 16S rRNA degradation (leading to ribosome degradation) during starvation. This Alteromonas mediterranea (strain DSM 17117 / CIP 110805 / LMG 28347 / Deep ecotype) protein is Ribonuclease PH.